The primary structure comprises 384 residues: Chaperone protein DnaJ 1 (384 aa).

Residues D4–G68 form the J domain. The CR-type zinc-finger motif lies at G133–R215. Zn(2+) contacts are provided by C146, C149, C163, C166, C189, C192, C203, and C206. 4 CXXCXGXG motif repeats span residues C146 to G153, C163 to G170, C189 to G196, and C203 to G210.

It belongs to the DnaJ family. Homodimer. Requires Zn(2+) as cofactor.

The protein resides in the cytoplasm. Participates actively in the response to hyperosmotic and heat shock by preventing the aggregation of stress-denatured proteins and by disaggregating proteins, also in an autonomous, DnaK-independent fashion. Unfolded proteins bind initially to DnaJ; upon interaction with the DnaJ-bound protein, DnaK hydrolyzes its bound ATP, resulting in the formation of a stable complex. GrpE releases ADP from DnaK; ATP binding to DnaK triggers the release of the substrate protein, thus completing the reaction cycle. Several rounds of ATP-dependent interactions between DnaJ, DnaK and GrpE are required for fully efficient folding. Also involved, together with DnaK and GrpE, in the DNA replication of plasmids through activation of initiation proteins. The chain is Chaperone protein DnaJ 1 from Nocardia farcinica (strain IFM 10152).